The chain runs to 277 residues: MEMO1 family protein TRQ2_0860 (277 aa).

The protein belongs to the MEMO1 family.

This Thermotoga sp. (strain RQ2) protein is MEMO1 family protein TRQ2_0860.